Consider the following 325-residue polypeptide: NADH-quinone oxidoreductase subunit H (325 aa).

The next 8 membrane-spanning stretches (helical) occupy residues 11-31, 81-101, 114-134, 154-174, 186-206, 237-257, 265-285, and 304-324; these read ILLT…CGAF, VIFT…FAIV, IGIL…LFAG, LSYE…AGSF, VWNV…GVAV, FFVG…TLFF, LPPF…FILI, and ICLP…LWQA.

It belongs to the complex I subunit 1 family. As to quaternary structure, NDH-1 is composed of 13 different subunits. Subunits NuoA, H, J, K, L, M, N constitute the membrane sector of the complex.

The protein resides in the cell inner membrane. The enzyme catalyses a quinone + NADH + 5 H(+)(in) = a quinol + NAD(+) + 4 H(+)(out). Its function is as follows. NDH-1 shuttles electrons from NADH, via FMN and iron-sulfur (Fe-S) centers, to quinones in the respiratory chain. The immediate electron acceptor for the enzyme in this species is believed to be ubiquinone. Couples the redox reaction to proton translocation (for every two electrons transferred, four hydrogen ions are translocated across the cytoplasmic membrane), and thus conserves the redox energy in a proton gradient. This subunit may bind ubiquinone. This Escherichia coli O7:K1 (strain IAI39 / ExPEC) protein is NADH-quinone oxidoreductase subunit H.